A 1721-amino-acid polypeptide reads, in one-letter code: Intersectin-1 (1721 aa).

Residues 21–109 (ERAKHDQQFH…PVMKQQPVAI (89 aa)) enclose the EH 1 domain. In terms of domain architecture, EF-hand 1 spans 53–88 (LPQPVLAQIWALADMNNDGRMDQVEFSIAMKLIKLK). Residues Asp-66, Asn-68, Asp-70, Arg-72, and Glu-77 each coordinate Ca(2+). Ser-203 carries the phosphoserine modification. The EH 2 domain maps to 221 to 310 (SRLKYRQLFN…PEYIPPSFRR (90 aa)). Positions 254–289 (LPQAQLASIWNLSDIDQDGKLTAEEFILAMHLIDVA) constitute an EF-hand 2 domain. The Ca(2+) site is built by Asp-267, Asp-269, Asp-271, Lys-273, and Glu-278. The residue at position 318 (Ser-318) is a Phosphoserine. Disordered stretches follow at residues 322–348 (STSV…KLPV) and 650–701 (QRRA…KQEA). A KLERQ region spans residues 326-702 (DQRLPEEPVL…GEEKGKQEAQ (377 aa)). Residues 355–659 (RENFERGNLE…QRRAQERDKQ (305 aa)) are a coiled coil. Position 687 is a phosphoserine (Ser-687). Positions 740–806 (VKVVYYRALY…PANYAEKIPE (67 aa)) constitute an SH3 1 domain. The tract at residues 836–868 (LAVTSSEPSTTPNNWADFSSTWPTSTNEKPETD) is disordered. A compositionally biased stretch (polar residues) spans 838–862 (VTSSEPSTTPNNWADFSSTWPTSTN). Position 897 is a phosphothreonine (Thr-897). Phosphoserine occurs at positions 901, 902, and 904. Residues 913–971 (VEGLQAQALYPWRAKKDNHLNFNKNDVITVLEQQDMWWFGEVQGQKGWFPKSYVKLISG) enclose the SH3 2 domain. Phosphoserine is present on residues Ser-978, Ser-986, and Ser-995. 2 consecutive SH3 domains span residues 1002–1060 (VSGE…LKDS) and 1074–1138 (KKPE…LLSP). The interval 1074–1138 (KKPEIAQVIA…PANYVKLLSP (65 aa)) is required for interaction with FCHSD2. Residues 1104 to 1127 (RKKNPGGWWEGELQARGKKRQIGW) carry the Bipartite nuclear localization signal; in isoform 2 motif. Ser-1137 bears the Phosphoserine mark. Thr-1144 carries the post-translational modification Phosphothreonine. In terms of domain architecture, SH3 5 spans 1155–1214 (AAVCQVIGMYDYTAQNDDELAFNKGQIINVLNKEDPDWWKGEVNGQVGLFPSNYVKLTTD). One can recognise a DH domain in the interval 1237-1423 (KRQGYIHELI…EELCSQVNEG (187 aa)). The PH domain occupies 1462-1571 (KFLHSGKLYK…WVQKIKAASE (110 aa)). The C2 domain maps to 1579–1695 (KKREKAYLVR…KKDQGSKGPV (117 aa)). Ser-1645 is subject to Phosphoserine. Residues Asp-1667, Ser-1670, and Asp-1673 each contribute to the Ca(2+) site.

In terms of assembly, interacts (via DH domain) with CDC42. Interacts (via SH3 domain 1) with WASL. Interacts with dynamin, SNAP25 and SNAP23. Interacts with clathrin-associated proteins and other components of the endocytic machinery, such as SPIN90, EPS15, EPN1, EPN2, STON2, FCHO1, FCHO2 and DAB2. Interacts (via SH3 domains) with REPS1 and SGIP1. Interacts with ARHGAP31. Interacts with ADAM15. Interacts with PRRT2. Interacts (via SH3 domain 4) with FCHSD2 (via SH3 domain 2). Interacts (via SH3 domain 1) with DENND2B. Interacts (via SH3 domains) with CBL. Isoform 2: Interacts with CBL and DNM1. Isoform 2: Interacts with LMNA. Isoform 2: Interacts with importin subunit KPNA1; this is likely to mediate its import into the nucleus. Interacts with DNM2. (Microbial infection) Interacts with vaccinia virus protein A36. It depends on Ca(2+) as a cofactor. Isoform 1 is expressed almost exclusively in the brain. Isoform 2 is detected in brain, spleen, lung, liver, heart, skeletal muscle and kidney. Isoform 5 is primarily expressed in brain, spleen, lung and kidney (at protein level). Isoform 1 and isoform 2 are detected in brain. Isoform 2 is ubiquitous in adult and fetal tissues with high expression in skeletal muscle, heart, spleen, ovary, testis and all fetal tissues tested and low expression in thymus, blood, lung, liver and pancreas. Isoform 1 is expressed almost exclusively in the brain, in all brain regions. Not expressed in the spinal cord.

It is found in the endomembrane system. Its subcellular location is the synapse. The protein resides in the synaptosome. The protein localises to the cell projection. It localises to the lamellipodium. It is found in the cell membrane. Its subcellular location is the membrane. The protein resides in the clathrin-coated pit. The protein localises to the recycling endosome. It localises to the endosome. It is found in the cytoplasmic vesicle. Its subcellular location is the cytoplasm. The protein resides in the nucleus envelope. Adapter protein that provides a link between the endocytic membrane traffic and the actin assembly machinery. Acts as a guanine nucleotide exchange factor (GEF) for CDC42, and thereby stimulates actin nucleation mediated by WASL and the ARP2/3 complex. Plays a role in the assembly and maturation of clathrin-coated vesicles. Recruits FCHSD2 to clathrin-coated pits. Involved in endocytosis of activated EGFR, and probably also other growth factor receptors. Involved in endocytosis of integrin beta-1 (ITGB1) and transferrin receptor (TFR); internalization of ITGB1 as DAB2-dependent cargo but not TFR may involve association with DAB2. Promotes ubiquitination and subsequent degradation of EGFR, and thereby contributes to the down-regulation of EGFR-dependent signaling pathways. In chromaffin cells, required for normal exocytosis of catecholamines. Required for rapid replenishment of release-ready synaptic vesicles at presynaptic active zones. Inhibits ARHGAP31 activity toward RAC1. Its function is as follows. Plays a role in synaptic vesicle endocytosis in brain neurons. This is Intersectin-1 from Homo sapiens (Human).